The chain runs to 491 residues: Cyclin-A1-3 (491 aa).

Residues 1-21 (MSSSLASRRSSSSSAAKRPAA) show a composition bias toward low complexity. 2 disordered regions span residues 1–32 (MSSS…AAGA) and 69–106 (SLAS…QKES). Over residues 75–91 (NVGTNRVSAVKSASTKP) the composition is skewed to polar residues.

Belongs to the cyclin family. Cyclin AB subfamily.

The protein is Cyclin-A1-3 (CYCA1-3) of Oryza sativa subsp. japonica (Rice).